The following is a 124-amino-acid chain: Small ribosomal subunit protein uS12 (124 aa).

Asp89 bears the 3-methylthioaspartic acid mark.

The protein belongs to the universal ribosomal protein uS12 family. In terms of assembly, part of the 30S ribosomal subunit. Contacts proteins S8 and S17. May interact with IF1 in the 30S initiation complex.

Its function is as follows. With S4 and S5 plays an important role in translational accuracy. In terms of biological role, interacts with and stabilizes bases of the 16S rRNA that are involved in tRNA selection in the A site and with the mRNA backbone. Located at the interface of the 30S and 50S subunits, it traverses the body of the 30S subunit contacting proteins on the other side and probably holding the rRNA structure together. The combined cluster of proteins S8, S12 and S17 appears to hold together the shoulder and platform of the 30S subunit. The sequence is that of Small ribosomal subunit protein uS12 from Shewanella denitrificans (strain OS217 / ATCC BAA-1090 / DSM 15013).